Reading from the N-terminus, the 267-residue chain is Staphylococcal secretory antigen ssaA2 (267 aa).

An N-terminal signal peptide occupies residues 1-27 (MKKIATATIATAGFATIAIASGNQAHA). A run of 7 repeats spans residues 83–85 (YNN), 86–88 (YNN), 89–91 (YNN), 95–97 (YNN), 101–103 (YNN), 104–106 (YSN), and 113–115 (YNN). A 7 X 3 AA repeats of Y-[NS]-N region spans residues 83–115 (YNNYNNYNNGYSYNNYSRYNNYSNNNQSYNYNN). Positions 146–267 (MAPSSNGRSI…SQAAGYNFIH (122 aa)) constitute a Peptidase C51 domain.

It localises to the secreted. Functionally, not known; immunogenic protein. This Staphylococcus aureus (strain NCTC 8325 / PS 47) protein is Staphylococcal secretory antigen ssaA2 (ssaA2).